The following is a 287-amino-acid chain: Protease HtpX (287 aa).

2 helical membrane-spanning segments follow: residues 4 to 24 (IFLL…VMSI) and 33 to 53 (GGLL…SLAI). Residue His-139 participates in Zn(2+) binding. Glu-140 is a catalytic residue. Residue His-143 participates in Zn(2+) binding. 2 helical membrane-spanning segments follow: residues 154–174 (LIQG…AGII) and 195–215 (AVVF…VAYF). Position 220 (Glu-220) interacts with Zn(2+).

It belongs to the peptidase M48B family. Requires Zn(2+) as cofactor.

The protein localises to the cell inner membrane. In Shewanella putrefaciens (strain CN-32 / ATCC BAA-453), this protein is Protease HtpX.